Reading from the N-terminus, the 294-residue chain is ATP synthase gamma chain (294 aa).

The protein belongs to the ATPase gamma chain family. As to quaternary structure, F-type ATPases have 2 components, CF(1) - the catalytic core - and CF(0) - the membrane proton channel. CF(1) has five subunits: alpha(3), beta(3), gamma(1), delta(1), epsilon(1). CF(0) has three main subunits: a, b and c.

Its subcellular location is the cell inner membrane. In terms of biological role, produces ATP from ADP in the presence of a proton gradient across the membrane. The gamma chain is believed to be important in regulating ATPase activity and the flow of protons through the CF(0) complex. This chain is ATP synthase gamma chain, found in Rhizobium leguminosarum bv. trifolii (strain WSM2304).